We begin with the raw amino-acid sequence, 215 residues long: Agamous-like MADS-box protein AGL63 (215 aa).

The MADS-box domain occupies 1-61; the sequence is MRKGKRVIKK…NRLYDFCSNS (61 aa). A K-box domain is found at 90–178; it reads CSDCVKTKES…GSSWEQLMWQ (89 aa). Disordered regions lie at residues 143–172 and 184–215; these read ARKSEFMHQQQQQQTDQKLKGKEKGQGSSW and MTCQRQKDPAPANEGGVPFLRWGTTHRRSSPP.

Forms homodimer. Interacts with AGL16. As to expression, expressed in bud pedicels, petals, anthers, style, ovary, seeds and embryos.

It localises to the nucleus. Functionally, probable transcription factor involved in the regulation of fruit growth. Contributes to integument development. Controls organ size via cell expansion. Involved in the regulation of longitudinal growth of the fruit evenly throughout the radial axis. Functions redundantly with TT16/AGL32 to repress nucellus growth and promote its degeneration. The chain is Agamous-like MADS-box protein AGL63 from Arabidopsis thaliana (Mouse-ear cress).